Consider the following 396-residue polypeptide: MSKEKFARTKPHCNVGTIGHVDHGKTSLTAAITKVLAEAGGATFQAYDQIDKAPEERARGITISTAHVEYETEARHYAHVDCPGHADYVKNMITGAAQMDGAILVVSAADGPMPQTREHILLARQVGVPALVVFLNKCDMVDDEELLELVELEVRELLTSYDFPGDDIPIIKGSALAALEDSDQKLGHDAILELMKAVDDYIPQPERPKDKPFLMPIEDVFSISGRGTVVTGRVERGIVKVGEEIEIIGIRDTQKTTCTGVEMFRKLLDQGEAGDNIGALLRGTKRDDVERGQVLAKPGSITPHTKFKCEAYILTKEEGGRHTPFFSNYRPQFYFRTTDVTGTIELPEGTEMVMPGDNIGMTVQLIAPIAMDEGLRFAIREGGRTVGAGVVASIVQ.

The tr-type G domain occupies 10–206; sequence KPHCNVGTIG…AVDDYIPQPE (197 aa). Residues 19 to 26 form a G1 region; the sequence is GHVDHGKT. Residue 19–26 coordinates GTP; sequence GHVDHGKT. Threonine 26 contributes to the Mg(2+) binding site. The interval 60–64 is G2; it reads GITIS. Positions 81–84 are G3; it reads DCPG. Residues 81–85 and 136–139 each bind GTP; these read DCPGH and NKCD. The segment at 136–139 is G4; it reads NKCD. Residues 174 to 176 are G5; it reads SAL.

This sequence belongs to the TRAFAC class translation factor GTPase superfamily. Classic translation factor GTPase family. EF-Tu/EF-1A subfamily. Monomer.

It localises to the cytoplasm. It catalyses the reaction GTP + H2O = GDP + phosphate + H(+). Functionally, GTP hydrolase that promotes the GTP-dependent binding of aminoacyl-tRNA to the A-site of ribosomes during protein biosynthesis. In Rhodospirillum rubrum (strain ATCC 11170 / ATH 1.1.1 / DSM 467 / LMG 4362 / NCIMB 8255 / S1), this protein is Elongation factor Tu 2.